The primary structure comprises 386 residues: N-acetylneuraminate epimerase (386 aa).

The signal sequence occupies residues 1-29; it reads MGMQMKNSKKMMTLMALCLSVAITTSGYA. Kelch repeat units follow at residues 51–95, 97–149, 151–186, 187–232, 235–284, 306–355, and 357–386; these read VIYV…VFLN, ELYV…VKLN, TMAL…RVIY, NYFN…AMEN, LTLI…LAGA, QNYT…NYGD, and IFLI…LLIE. Residue Glu241 is the Proton acceptor of the active site.

The protein belongs to the NanM family. Homodimer.

The protein resides in the periplasm. The catalysed reaction is N-acetyl-alpha-neuraminate = N-acetyl-beta-neuraminate. Functionally, converts alpha-N-acetylneuranimic acid (Neu5Ac) to the beta-anomer, accelerating the equilibrium between the alpha- and beta-anomers. Probably facilitates sialidase-negative bacteria to compete successfully for limited amounts of extracellular Neu5Ac, which is likely taken up in the beta-anomer. In addition, the rapid removal of sialic acid from solution might be advantageous to the bacterium to damp down host responses. This chain is N-acetylneuraminate epimerase, found in Salmonella arizonae (strain ATCC BAA-731 / CDC346-86 / RSK2980).